A 512-amino-acid chain; its full sequence is Putative ankyrin repeat protein FPV233 (512 aa).

8 ANK repeats span residues 45 to 73, 77 to 106, 136 to 168, 172 to 201, 205 to 236, 238 to 262, 266 to 296, and 301 to 329; these read IPFI…NVNQ, DDTY…QCSV, IQDI…DINM, HGNS…NPNI, TNKS…NTDP, LSHA…SINA, YGNT…DVNA, and RNLT…DINS.

This is Putative ankyrin repeat protein FPV233 from Vertebrata (FPV).